The chain runs to 159 residues: Trafficking protein particle complex subunit 6A (159 aa).

Serine 33 carries the phosphoserine modification.

Belongs to the TRAPP small subunits family. BET3 subfamily. In terms of assembly, part of the multisubunit transport protein particle (TRAPP) complex. Heterodimer with TRAPPC3. The heterodimer TRAPPC3-TRAPPC6A interacts with TRAPPC2L. Interacts with TRAPPC2L.

The protein resides in the golgi apparatus. It is found in the cis-Golgi network. It localises to the endoplasmic reticulum. May play a role in vesicular transport during the biogenesis of melanosomes. This Bos taurus (Bovine) protein is Trafficking protein particle complex subunit 6A.